The sequence spans 361 residues: uncharacterized protein (361 aa).

A compositionally biased stretch (basic residues) spans 1 to 10 (MRRYLKKAKP). Disordered stretches follow at residues 1-82 (MRRY…SSFH) and 94-147 (ALSH…VNTS). Composition is skewed to basic and acidic residues over residues 44–57 (KEKNSGKFRVKYEN) and 120–134 (FTKKEEDSSTKESEL). Residues 135–147 (QTRSSPPLPVNTS) are compositionally biased toward polar residues. Positions 295–349 (NILTMDEQIQRLKEAIASEKLQQEERSQIIKSLMEEELEINEQEEKIKHSFIDLD) form a coiled coil.

Its subcellular location is the cytoplasm. The protein resides in the nucleus. This is an uncharacterized protein from Schizosaccharomyces pombe (strain 972 / ATCC 24843) (Fission yeast).